A 307-amino-acid chain; its full sequence is Ninja-family protein 5 (307 aa).

2 disordered regions span residues 1-159 and 173-208; these read MASR…EHTV and TAGS…EPQP. The segment covering 8 to 30 has biased composition (gly residues); sequence GGFGRDGGQAPVGGAGAAPGPGG. Polar residues-rich tracts occupy residues 63 to 83 and 173 to 183; these read QRSS…GTSC and TAGSPTPSRPQ.

Belongs to the Ninja family.

Its subcellular location is the nucleus. In Zea mays (Maize), this protein is Ninja-family protein 5.